A 425-amino-acid chain; its full sequence is (S)-6-hydroxynicotine oxidase (425 aa).

Residues S12, E31, 38 to 39 (GR), and 56 to 59 (GGAY) contribute to the FAD site. N166 contributes to the (S)-6-hydroxynicotine binding site. V226 provides a ligand contact to FAD. (S)-6-hydroxynicotine-binding residues include Y311, F326, and W371. Residues S398 and 406 to 408 (GYI) each bind FAD. (S)-6-hydroxynicotine is bound at residue Y407.

The protein belongs to the flavin monoamine oxidase family. As to quaternary structure, homodimer. FAD is required as a cofactor.

The protein resides in the cytoplasm. It catalyses the reaction (S)-6-hydroxynicotine + O2 + H2O = 6-hydroxypseudooxynicotine + H2O2. The enzyme catalyses (S)-6-hydroxynicotine + O2 = 6-hydroxy-N-methylmyosmine + H2O2. The protein operates within alkaloid degradation; nicotine degradation; 6-hydroxypseudooxynicotine from nicotine (S-isomer route): step 2/2. Inhibited by (R)-6-hydroxynicotine. Inhibited by high concentrations of phenanthroline. Activity is strongly affected by Hg(2+) and p-chloromercuriphenylsulfonate, but not by N-ethylmaleimide and 5,5'-dithiobis-(2-nitrobenzoate). In terms of biological role, involved in the degradation of L-nicotine. Catalyzes the oxidation of (S)-6-hydroxynicotine (6-hydroxy-L-nicotine) to 6-hydroxypseudooxynicotine. Oxidation of the pyrrolidine ring of (S)-6-hydroxynicotine leads to the formation of the optically inactive 6-hydroxy-N-methylmyosmine, which hydrolyzes spontaneously to 6-hydroxypseudooxynicotine. Acts with absolute stereospecificity on the L-form of 6-hydroxynicotine. Can also use (S)-6-hydroxynornicotine. The protein is (S)-6-hydroxynicotine oxidase of Paenarthrobacter nicotinovorans (Arthrobacter nicotinovorans).